A 688-amino-acid chain; its full sequence is Probable transcription factor gsfR1 (688 aa).

Over residues 1–16 (MSDGPETAEGDTDDAV) the composition is skewed to acidic residues. The disordered stretch occupies residues 1–95 (MSDGPETAEG…TPVSSRGSIA (95 aa)). A compositionally biased stretch (polar residues) spans 24–36 (RVASESSARSQPR). Positions 58-75 (EHSKEKNVSRRLPTEKTP) are enriched in basic and acidic residues.

Its subcellular location is the nucleus. In terms of biological role, probable transcription factor that regulates expression of the gene cluster that mediates the biosynthesis of Griseofulvin, an important antifungal drug that has been in use for a long time for treating dermatophyte infections. This Penicillium aethiopicum protein is Probable transcription factor gsfR1.